The primary structure comprises 394 residues: T-cell acute lymphocytic leukemia protein 1 (394 aa).

Over residues 1 to 17 (MSLKMMERLSTDMDGTR) the composition is skewed to basic and acidic residues. Residues 1–49 (MSLKMMERLSTDMDGTRDVASPPARQDAAEPERTVELSGVKEGAAPNSP) are disordered. Tandem repeats lie at residues 83–89 (TELCRAT), 94–100 (TELCRAP), 105–111 (TELCRAP), 116–122 (TELCRAP), 127–133 (TELCRPP), 149–155 (SELCRAP), and 167–173 (TELCRPP). Residues 83-173 (TELCRATLTP…TATTELCRPP (91 aa)) are 7 X 7 AA approximate repeats of [TS]-E-L-C-R-[AP]-P. The bHLH domain occupies 262-314 (VRRIFTNSRERWRQQNVNGAFAELRKLIPTHPPDKKLSKNEILRLAMKYINFL). A disordered region spans residues 347–394 (LSPNSSCGSSLDGAPSPDSYSEEHDALDSKHSRNLHQAMLPIDGSGQR). A compositionally biased stretch (basic and acidic residues) spans 367–377 (SEEHDALDSKH).

In terms of tissue distribution, first expressed in patches on the ventral side of the embryo in a region that will give rise to hematopoietic tissue. By late neurula stages, expressed throughout the ventral blood island region. By tailbud stages, expression extends to probable vascular progenitor cells, but is excluded from the presumptive liver anlage. Also expressed in the central nervous system at the tailbud stage.

It is found in the nucleus. In terms of biological role, transcription factor that acts synergistically with lmo2 and gata1 to specify embryonic dorsal mesoderm to a hematopoietic fate. In Xenopus laevis (African clawed frog), this protein is T-cell acute lymphocytic leukemia protein 1.